Consider the following 1203-residue polypeptide: Regulator of telomere elongation helicase 1 (1203 aa).

The 290-residue stretch at 7-296 (NGVTVDFPFQ…ARVTQQGELQ (290 aa)) folds into the Helicase ATP-binding domain. ATP is bound at residue 42–49 (SPTGTGKT). Cys145, Cys163, Cys172, and Cys207 together coordinate [4Fe-4S] cluster. Residues 151–167 (KKQESNHMQISLCRKKV) carry the Nuclear localization signal motif. Positions 250 to 253 (DEAH) match the DEAH box motif. Positions 871–877 (QKGGRKK) match the Nuclear localization signal motif. Disordered stretches follow at residues 998–1020 (QLDP…TSKG) and 1120–1203 (TTGK…RSKQ). The segment covering 1004–1020 (HLNQGQPHLSAHPTSKG) has biased composition (polar residues). The segment covering 1123–1134 (KDLELEGPRDES) has biased composition (basic and acidic residues). The short motif at 1160-1167 (QSKISSFF) is the PIP-box element. Residues 1169–1181 (QRPDESVRSDDTT) show a composition bias toward basic and acidic residues.

It belongs to the helicase family. RAD3/XPD subfamily. Interacts with TERF1. Interacts (via PIP-box) with PCNA; the interaction is direct and essential for suppressing telomere fragility. Interacts with MMS19; the interaction mediates the association of RTEL1 with the cytosolic iron-sulfur protein assembly (CIA) complex. Widely expressed. Expressed in spleen, thymus, Peyer patches, kidney, and intestine. Not expressed in brain, heart, lung, skeletal muscles, skin and white fat. In the adult gonad, it is highly expressed in the testis, mainly in the spermatogonia and meiotic spermatocytes.

The protein resides in the nucleus. The catalysed reaction is ATP + H2O = ADP + phosphate + H(+). A probable ATP-dependent DNA helicase implicated in telomere-length regulation, DNA repair and the maintenance of genomic stability. Acts as an anti-recombinase to counteract toxic recombination and limit crossover during meiosis. Regulates meiotic recombination and crossover homeostasis by physically dissociating strand invasion events and thereby promotes noncrossover repair by meiotic synthesis dependent strand annealing (SDSA) as well as disassembly of D loop recombination intermediates. Also disassembles T loops and prevents telomere fragility by counteracting telomeric G4-DNA structures, which together ensure the dynamics and stability of the telomere. The sequence is that of Regulator of telomere elongation helicase 1 from Mus musculus (Mouse).